The sequence spans 240 residues: Regulatory protein HlyX (240 aa).

The tract at residues 15-28 (CTIHCQNCSISQLC) is essential for the oxygen-regulated activity. The HTH crp-type domain occupies 163–236 (MSAEEKLAAF…GKYITINRMD (74 aa)). The segment at residues 196 to 215 (RGDIGNYLGLTIETISRLLG) is a DNA-binding region (H-T-H motif).

The protein localises to the cytoplasm. Confers a hemolytic phenotype on E.coli. May regulate, rather than mediate, hemolytic activity. The chain is Regulatory protein HlyX (hlyX) from Actinobacillus pleuropneumoniae (Haemophilus pleuropneumoniae).